The primary structure comprises 236 residues: Movement and silencing protein TGBp1 (236 aa).

A (+)RNA virus helicase ATP-binding domain is found at 1–117 (MDSEIVERLT…EPTARAHYTC (117 aa)). Positions 118–236 (NRTHRLGQLT…LYTAHFAPSA (119 aa)) constitute a (+)RNA virus helicase C-terminal domain.

The protein belongs to the Tymovirales TGBp1 protein family. In terms of assembly, homodimer and homooligomer. Interacts with capsid protein. Interacts with host AGO1; this interaction targets the host protein for degradation, thereby suppressing the antiviral RNA silencing.

Its subcellular location is the host cytoplasm. Transports viral genome to neighboring plant cells directly through plasmosdesmata, without any budding. The movement protein allows efficient cell to cell propagation, by bypassing the host cell wall barrier. Increases plasmodesma size exclusion limit. Acts as a suppressor of RNA-mediated gene silencing, also known as post-transcriptional gene silencing (PTGS), a mechanism of plant viral defense that limits the accumulation of viral RNAs. This chain is Movement and silencing protein TGBp1, found in Setaria italica (Foxtail millet).